Reading from the N-terminus, the 197-residue chain is MTRLEQLKQHLQDVFGNSITRLQECRNEVTIECQAPCLLEVANLLRDHKLLKFEQLIDLCGVDYADYGEGSWSGLRYATVYHFLSVSLNQRLRLRVFAPDDDFPVLPTVVDIWPVANWFERESFDLFGIMYEGHPDLRRLLTDYGFVGHPFRKDFPMIGNVEMRYDPERQRVVYQPVTIDPRNNVPRVIREEGFHHG.

It belongs to the complex I 30 kDa subunit family. In terms of assembly, NDH-1 is composed of 14 different subunits. Subunits NuoB, C, D, E, F, and G constitute the peripheral sector of the complex.

The protein resides in the cell inner membrane. The enzyme catalyses a quinone + NADH + 5 H(+)(in) = a quinol + NAD(+) + 4 H(+)(out). NDH-1 shuttles electrons from NADH, via FMN and iron-sulfur (Fe-S) centers, to quinones in the respiratory chain. The immediate electron acceptor for the enzyme in this species is believed to be ubiquinone. Couples the redox reaction to proton translocation (for every two electrons transferred, four hydrogen ions are translocated across the cytoplasmic membrane), and thus conserves the redox energy in a proton gradient. This Methylobacillus flagellatus (strain ATCC 51484 / DSM 6875 / VKM B-1610 / KT) protein is NADH-quinone oxidoreductase subunit C.